Here is a 156-residue protein sequence, read N- to C-terminus: Envelope glycoprotein L (156 aa).

Positions 1-16 (MSPLVAVLVFFSAALG) are cleaved as a signal peptide. An interaction with gH region spans residues 21–141 (GVAGNPHGLD…KELGEVAVHK (121 aa)). The gL alphaherpesvirus-type domain occupies 50–156 (ELEWDDEDHP…LRYNGGPPAE (107 aa)). The cysteines at positions 71 and 95 are disulfide-linked.

The protein belongs to the herpesviridae glycoprotein L (gL) family. Alphaherpesvirinae gL subfamily. In terms of assembly, interacts with glycoprotein H (gH); this interaction is necessary for the correct processing and cell surface expression of gH. The heterodimer gH/gL seems to interact with gB trimers during fusion. O-glycosylated, and sialylated.

It is found in the virion membrane. Its subcellular location is the host cell membrane. It localises to the host Golgi apparatus. The protein localises to the host trans-Golgi network. The heterodimer glycoprotein H-glycoprotein L is required for the fusion of viral and plasma membranes leading to virus entry into the host cell. Acts as a functional inhibitor of gH and maintains gH in an inhibited form. Upon binding to host integrins, gL dissociates from gH leading to activation of the viral fusion glycoproteins gB and gH. The protein is Envelope glycoprotein L of Sus scrofa (Pig).